The sequence spans 457 residues: Argininosuccinate lyase (457 aa).

Belongs to the lyase 1 family. Argininosuccinate lyase subfamily.

It is found in the cytoplasm. It carries out the reaction 2-(N(omega)-L-arginino)succinate = fumarate + L-arginine. The protein operates within amino-acid biosynthesis; L-arginine biosynthesis; L-arginine from L-ornithine and carbamoyl phosphate: step 3/3. In Salmonella arizonae (strain ATCC BAA-731 / CDC346-86 / RSK2980), this protein is Argininosuccinate lyase.